The chain runs to 469 residues: UDP-N-acetylmuramate--L-alanine ligase (469 aa).

ATP is bound at residue 119-125; the sequence is GTHGKTT.

It belongs to the MurCDEF family.

Its subcellular location is the cytoplasm. The enzyme catalyses UDP-N-acetyl-alpha-D-muramate + L-alanine + ATP = UDP-N-acetyl-alpha-D-muramoyl-L-alanine + ADP + phosphate + H(+). It participates in cell wall biogenesis; peptidoglycan biosynthesis. Its function is as follows. Cell wall formation. In Vesicomyosocius okutanii subsp. Calyptogena okutanii (strain HA), this protein is UDP-N-acetylmuramate--L-alanine ligase.